The following is a 240-amino-acid chain: UDP-2,3-diacylglucosamine hydrolase (240 aa).

Positions 8, 10, 41, 79, and 114 each coordinate Mn(2+). 79-80 (NR) serves as a coordination point for substrate. 5 residues coordinate substrate: aspartate 122, serine 160, asparagine 164, lysine 167, and histidine 195. Mn(2+)-binding residues include histidine 195 and histidine 197.

This sequence belongs to the LpxH family. Requires Mn(2+) as cofactor.

The protein localises to the cell inner membrane. The catalysed reaction is UDP-2-N,3-O-bis[(3R)-3-hydroxytetradecanoyl]-alpha-D-glucosamine + H2O = 2-N,3-O-bis[(3R)-3-hydroxytetradecanoyl]-alpha-D-glucosaminyl 1-phosphate + UMP + 2 H(+). Its pathway is glycolipid biosynthesis; lipid IV(A) biosynthesis; lipid IV(A) from (3R)-3-hydroxytetradecanoyl-[acyl-carrier-protein] and UDP-N-acetyl-alpha-D-glucosamine: step 4/6. In terms of biological role, hydrolyzes the pyrophosphate bond of UDP-2,3-diacylglucosamine to yield 2,3-diacylglucosamine 1-phosphate (lipid X) and UMP by catalyzing the attack of water at the alpha-P atom. Involved in the biosynthesis of lipid A, a phosphorylated glycolipid that anchors the lipopolysaccharide to the outer membrane of the cell. This chain is UDP-2,3-diacylglucosamine hydrolase, found in Salmonella newport (strain SL254).